Consider the following 385-residue polypeptide: Di-N-acetylchitobiase (385 aa).

A signal peptide spans 1–38 (MSRPQLRRWRLVSSPPSGVPGLALLALLALLALRLAAG). The GH18 domain maps to 39-385 (TDCPCPEPEL…EVLKPKLLQR (347 aa)). Glu-143 functions as the Proton donor in the catalytic mechanism. N-linked (GlcNAc...) asparagine glycans are attached at residues Asn-193, Asn-228, Asn-262, and Asn-299.

This sequence belongs to the glycosyl hydrolase 18 family.

The protein resides in the lysosome. Functionally, involved in the degradation of asparagine-linked glycoproteins. Hydrolyze of N-acetyl-beta-D-glucosamine (1-4)N-acetylglucosamine chitobiose core from the reducing end of the bond, it requires prior cleavage by glycosylasparaginase. The chain is Di-N-acetylchitobiase (CTBS) from Homo sapiens (Human).